Consider the following 331-residue polypeptide: MSDALIASSSEAPQSPAEQYDPTRKQKSADKTARIPIKIVPAEKLKKPDWIRVKAATGNSRFYEIKDILRANNLVTVCEEASCPNIGECFGKGTATFMIMGDKCTRRCPFCDVGHGRPDPLDVNEPGNLARTIAQLKLNYVVITSVDRDDLRDGGAQHYVDCISQTRELSPATRIEVLVPDFRGRLDKALDILQACPPDVMNHNMETVPRLYKQARPGADYAHSLKLLQEFKRRNPNVPTKSGLMVGLGETDEEILEVMRDMRAHDIDMLTIGQYLAPSNHHLPVLRYVHPDTFKMFEEEAYKMGFTHAAVGAMVRSSYHADQQAHQAGFA.

The segment at 1–33 (MSDALIASSSEAPQSPAEQYDPTRKQKSADKTA) is disordered. The segment covering 7–19 (ASSSEAPQSPAEQ) has biased composition (low complexity). Residues 21 to 33 (DPTRKQKSADKTA) are compositionally biased toward basic and acidic residues. 7 residues coordinate [4Fe-4S] cluster: C78, C83, C89, C104, C108, C111, and S318. The Radical SAM core domain occupies 89 to 307 (CFGKGTATFM…EEEAYKMGFT (219 aa)).

It belongs to the radical SAM superfamily. Lipoyl synthase family. [4Fe-4S] cluster serves as cofactor.

The protein localises to the cytoplasm. It carries out the reaction [[Fe-S] cluster scaffold protein carrying a second [4Fe-4S](2+) cluster] + N(6)-octanoyl-L-lysyl-[protein] + 2 oxidized [2Fe-2S]-[ferredoxin] + 2 S-adenosyl-L-methionine + 4 H(+) = [[Fe-S] cluster scaffold protein] + N(6)-[(R)-dihydrolipoyl]-L-lysyl-[protein] + 4 Fe(3+) + 2 hydrogen sulfide + 2 5'-deoxyadenosine + 2 L-methionine + 2 reduced [2Fe-2S]-[ferredoxin]. It functions in the pathway protein modification; protein lipoylation via endogenous pathway; protein N(6)-(lipoyl)lysine from octanoyl-[acyl-carrier-protein]: step 2/2. Its function is as follows. Catalyzes the radical-mediated insertion of two sulfur atoms into the C-6 and C-8 positions of the octanoyl moiety bound to the lipoyl domains of lipoate-dependent enzymes, thereby converting the octanoylated domains into lipoylated derivatives. This chain is Lipoyl synthase, found in Cupriavidus pinatubonensis (strain JMP 134 / LMG 1197) (Cupriavidus necator (strain JMP 134)).